The primary structure comprises 361 residues: Feruloyl CoA ortho-hydroxylase 1 (361 aa).

Residues 204–312 (TKESLFMGSI…RISVPIFVNP (109 aa)) enclose the Fe2OG dioxygenase domain. Y220 is a binding site for 2-oxoglutarate. The Fe cation site is built by H235, D237, and H293. 2-oxoglutarate is bound by residues R303 and S305.

The protein belongs to the iron/ascorbate-dependent oxidoreductase family. It depends on L-ascorbate as a cofactor. Requires Fe(2+) as cofactor. Highly expressed in roots, especially in the cortex.

It carries out the reaction (E)-feruloyl-CoA + 2-oxoglutarate + O2 = (E)-6-hydroxyferuloyl-CoA + succinate + CO2. The catalysed reaction is (E)-6-hydroxyferuloyl-CoA = scopoletin + CoA. It participates in phenylpropanoid metabolism. 2-oxoglutarate (OG)- and Fe(II)-dependent dioxygenase (2OGD) involved in scopoletin biosynthesis. Converts feruloyl CoA into 6'-hydroxyferuloyl CoA but has no activity with ferulic acid, feruloylquinic acid, caffeic acid, caffeoyl CoA, p-coumaric acid, cinnamic acid, cinnamoyl CoA or benzoyl CoA. Required for the production and secretion of compounds (e.g. fluorescent coumarins) that facilitate the mobilization and uptake of iron from sources with low bioavailability or in high pH-induced iron deficiency conditions. Involved in the pathway of sideretin biosynthesis from feruloyl CoA, a redox-active catecholic metabolite exuded by roots in response to iron deficiency in order to facilitate the uptake of iron; this pathway consists in the successive conversion from feruloyl CoA to scopoletin, from scopoletin to fraxetin and from fraxetin to sideretin. Catalyzes the biosynthesis of scopoletin from feruloyl CoA. The protein is Feruloyl CoA ortho-hydroxylase 1 of Arabidopsis thaliana (Mouse-ear cress).